The following is a 233-amino-acid chain: Superoxide dismutase [Mn], mitochondrial (233 aa).

Residues 1–27 (MALRSLVTRKNLPSAFKAATGLGQLRG) constitute a mitochondrion transit peptide. The Mn(2+) site is built by His55, His103, Asp192, and His196.

This sequence belongs to the iron/manganese superoxide dismutase family. As to quaternary structure, homotetramer. The cofactor is Mn(2+). Present in all tissues examined (leaf, petiole, root, latex, callus) with young leaves showing the highest levels in intact plants.

The protein localises to the mitochondrion matrix. The catalysed reaction is 2 superoxide + 2 H(+) = H2O2 + O2. Functionally, destroys superoxide anion radicals which are normally produced within the cells and which are toxic to biological systems. This is Superoxide dismutase [Mn], mitochondrial (SODA) from Hevea brasiliensis (Para rubber tree).